The chain runs to 231 residues: Cytochrome c oxidase assembly factor 7A (231 aa).

Sel1-like repeat units follow at residues 34–66, 68–104, 108–145, 146–182, and 183–218; these read PDGC…DQNE, SESF…NKGG, IDSC…DGNF, AASC…SLGH, and VWGC…DLHK.

This sequence belongs to the hcp beta-lactamase family.

Its subcellular location is the mitochondrion intermembrane space. In terms of biological role, may be required for assembly of mitochondrial respiratory chain complexes. This chain is Cytochrome c oxidase assembly factor 7A (coa7-a), found in Xenopus laevis (African clawed frog).